Consider the following 984-residue polypeptide: Mediator of RNA polymerase II transcription subunit 5 (984 aa).

The protein belongs to the Mediator complex subunit 5 family. As to quaternary structure, component of the Mediator complex.

Its subcellular location is the nucleus. Its function is as follows. Component of the Mediator complex, a coactivator involved in the regulated transcription of nearly all RNA polymerase II-dependent genes. Mediator functions as a bridge to convey information from gene-specific regulatory proteins to the basal RNA polymerase II transcription machinery. Mediator is recruited to promoters by direct interactions with regulatory proteins and serves as a scaffold for the assembly of a functional preinitiation complex with RNA polymerase II and the general transcription factors. The polypeptide is Mediator of RNA polymerase II transcription subunit 5 (NUT1) (Phaeosphaeria nodorum (strain SN15 / ATCC MYA-4574 / FGSC 10173) (Glume blotch fungus)).